The following is a 303-amino-acid chain: Nucleotide-binding protein SAB0719 (303 aa).

18–25 (GLSGAGKS) is an ATP binding site. 69-72 (DLRG) serves as a coordination point for GTP.

It belongs to the RapZ-like family.

Functionally, displays ATPase and GTPase activities. The polypeptide is Nucleotide-binding protein SAB0719 (Staphylococcus aureus (strain bovine RF122 / ET3-1)).